The chain runs to 40 residues: Photosystem II reaction center protein X (40 aa).

Over 1–11 (TITPSLKGFFI) the chain is Lumenal. Residues 12–28 (GLLSGAVVLGLTFAVLI) traverse the membrane as a helical segment. At 29 to 40 (AISQIDKVQRSL) the chain is on the cytoplasmic side.

The protein belongs to the PsbX family. Type 1 subfamily. PSII is composed of 1 copy each of membrane proteins PsbA, PsbB, PsbC, PsbD, PsbE, PsbF, PsbH, PsbI, PsbJ, PsbK, PsbL, PsbM, PsbT, PsbX, PsbY, PsbZ, Psb30/Ycf12, peripheral proteins PsbO, CyanoQ (PsbQ), PsbU, PsbV and a large number of cofactors. It forms dimeric complexes. The cofactor is PSII binds multiple chlorophylls, carotenoids and specific lipids..

The protein localises to the cellular thylakoid membrane. Involved in the binding and/or turnover of quinones at the Q(B) site of photosystem II (PSII). PSII is a light-driven water plastoquinone oxidoreductase, using light energy to abstract electrons from H(2)O, generating a proton gradient subsequently used for ATP formation. The protein is Photosystem II reaction center protein X of Thermostichus vulcanus (Synechococcus vulcanus).